We begin with the raw amino-acid sequence, 548 residues long: Phenylalanine--tRNA ligase beta subunit (548 aa).

A B5 domain is found at 271-346 (LSEAAAKLDP…ISIGYEALGP (76 aa)). D324, D330, E333, and D334 together coordinate Mg(2+).

It belongs to the phenylalanyl-tRNA synthetase beta subunit family. Type 2 subfamily. Tetramer of two alpha and two beta subunits. Mg(2+) serves as cofactor.

It is found in the cytoplasm. The catalysed reaction is tRNA(Phe) + L-phenylalanine + ATP = L-phenylalanyl-tRNA(Phe) + AMP + diphosphate + H(+). The protein is Phenylalanine--tRNA ligase beta subunit of Aeropyrum pernix (strain ATCC 700893 / DSM 11879 / JCM 9820 / NBRC 100138 / K1).